Here is a 569-residue protein sequence, read N- to C-terminus: Urease subunit alpha (569 aa).

The Urease domain maps to 131–569 (GGFDAHIHFI…LPLAQRYFMY (439 aa)). His136, His138, and Lys219 together coordinate Ni(2+). Residue Lys219 is modified to N6-carboxylysine. His221 provides a ligand contact to substrate. Ni(2+) is bound by residues His248 and His274. Catalysis depends on His322, which acts as the Proton donor. Asp362 is a binding site for Ni(2+).

This sequence belongs to the metallo-dependent hydrolases superfamily. Urease alpha subunit family. In terms of assembly, heterotrimer of UreA (gamma), UreB (beta) and UreC (alpha) subunits. Three heterotrimers associate to form the active enzyme. Ni cation is required as a cofactor. Carboxylation allows a single lysine to coordinate two nickel ions.

The protein localises to the cytoplasm. The catalysed reaction is urea + 2 H2O + H(+) = hydrogencarbonate + 2 NH4(+). It functions in the pathway nitrogen metabolism; urea degradation; CO(2) and NH(3) from urea (urease route): step 1/1. This is Urease subunit alpha from Jannaschia sp. (strain CCS1).